We begin with the raw amino-acid sequence, 273 residues long: Ethanolamine ammonia-lyase small subunit (273 aa).

Residues V164, E185, and C214 each contribute to the adenosylcob(III)alamin site.

This sequence belongs to the EutC family. As to quaternary structure, the basic unit is a heterodimer which dimerizes to form tetramers. The heterotetramers trimerize; 6 large subunits form a core ring with 6 small subunits projecting outwards. Requires adenosylcob(III)alamin as cofactor.

The protein resides in the bacterial microcompartment. The enzyme catalyses ethanolamine = acetaldehyde + NH4(+). The protein operates within amine and polyamine degradation; ethanolamine degradation. Its function is as follows. Catalyzes the deamination of various vicinal amino-alcohols to oxo compounds. Allows this organism to utilize ethanolamine as the sole source of nitrogen and carbon in the presence of external vitamin B12. This Pseudomonas paraeruginosa (strain DSM 24068 / PA7) (Pseudomonas aeruginosa (strain PA7)) protein is Ethanolamine ammonia-lyase small subunit.